Reading from the N-terminus, the 329-residue chain is MSAETGSRAPHIPVLLEEVVAALDPKPGDLIVDATFGAGGYTRRLLDAGATVHAFDRDPDAIAAGKLWGETCGKEPRLVLHPRRFSEIAEGLAEAGIAGVQGVVFDIGVSSMQLDQAARGFAFSSDGPLDMRMSQEGPSAADFLNEADEGEIADVLYRYGEERQSRRIARAIVAARPLTTTAQFAAVVRKALGYRPDIKGPKAPKDPATRSFQAVRIHVNGELDELVQGLAAAEKVLVPGGRIAVVSFHSLEDRIVKQFLREGAGAVPAGSRHLPQLESKVQAVFEKPSGAIRPTPEEEARNPRARSATLRCAVRTAAPARAHQGRAAA.

S-adenosyl-L-methionine contacts are provided by residues glycine 39 to tyrosine 41, aspartate 56, phenylalanine 85, aspartate 106, and glutamine 113. Residues serine 289–alanine 308 are disordered.

This sequence belongs to the methyltransferase superfamily. RsmH family.

It localises to the cytoplasm. The catalysed reaction is cytidine(1402) in 16S rRNA + S-adenosyl-L-methionine = N(4)-methylcytidine(1402) in 16S rRNA + S-adenosyl-L-homocysteine + H(+). Its function is as follows. Specifically methylates the N4 position of cytidine in position 1402 (C1402) of 16S rRNA. This chain is Ribosomal RNA small subunit methyltransferase H, found in Novosphingobium aromaticivorans (strain ATCC 700278 / DSM 12444 / CCUG 56034 / CIP 105152 / NBRC 16084 / F199).